Here is a 197-residue protein sequence, read N- to C-terminus: LexA repressor (197 aa).

Positions 28–47 (VREIARRFRITPRGALLHLI) form a DNA-binding region, H-T-H motif. Catalysis depends on for autocatalytic cleavage activity residues serine 119 and lysine 156.

It belongs to the peptidase S24 family. Homodimer.

It carries out the reaction Hydrolysis of Ala-|-Gly bond in repressor LexA.. In terms of biological role, represses a number of genes involved in the response to DNA damage (SOS response), including recA and lexA. In the presence of single-stranded DNA, RecA interacts with LexA causing an autocatalytic cleavage which disrupts the DNA-binding part of LexA, leading to derepression of the SOS regulon and eventually DNA repair. This is LexA repressor from Thermotoga sp. (strain RQ2).